The primary structure comprises 229 residues: Ion-translocating oxidoreductase complex subunit E (229 aa).

The next 5 membrane-spanning stretches (helical) occupy residues 58 to 78 (LGLG…ISLF), 82 to 102 (IPHD…VTTI), 105 to 125 (LMNA…PLIV), 147 to 167 (AFDG…LGAI), and 201 to 221 (GLLL…ILAV).

The protein belongs to the NqrDE/RnfAE family. The complex is composed of six subunits: RnfA, RnfB, RnfC, RnfD, RnfE and RnfG.

It is found in the cell inner membrane. In terms of biological role, part of a membrane-bound complex that couples electron transfer with translocation of ions across the membrane. The sequence is that of Ion-translocating oxidoreductase complex subunit E from Glaesserella parasuis serovar 5 (strain SH0165) (Haemophilus parasuis).